The chain runs to 330 residues: Anthranilate phosphoribosyltransferase (330 aa).

5-phospho-alpha-D-ribose 1-diphosphate contacts are provided by residues G77, G80–D81, T85, N87–T90, K105–S113, and S117. Residue G77 coordinates anthranilate. S89 serves as a coordination point for Mg(2+). Residue N108 participates in anthranilate binding. Position 163 (R163) interacts with anthranilate. 2 residues coordinate Mg(2+): D222 and E223.

The protein belongs to the anthranilate phosphoribosyltransferase family. Homodimer. The cofactor is Mg(2+).

The catalysed reaction is N-(5-phospho-beta-D-ribosyl)anthranilate + diphosphate = 5-phospho-alpha-D-ribose 1-diphosphate + anthranilate. Its pathway is amino-acid biosynthesis; L-tryptophan biosynthesis; L-tryptophan from chorismate: step 2/5. Functionally, catalyzes the transfer of the phosphoribosyl group of 5-phosphorylribose-1-pyrophosphate (PRPP) to anthranilate to yield N-(5'-phosphoribosyl)-anthranilate (PRA). This Pelagibacter ubique (strain HTCC1062) protein is Anthranilate phosphoribosyltransferase.